The primary structure comprises 335 residues: Fructose-1,6-bisphosphatase class 1 1 (335 aa).

Positions 92, 114, 116, and 117 each coordinate Mg(2+). Residues 117–120 (DGSS), N209, and K275 each bind substrate. E281 serves as a coordination point for Mg(2+).

This sequence belongs to the FBPase class 1 family. Homotetramer. Mg(2+) is required as a cofactor.

The protein localises to the cytoplasm. It carries out the reaction beta-D-fructose 1,6-bisphosphate + H2O = beta-D-fructose 6-phosphate + phosphate. Its pathway is carbohydrate biosynthesis; gluconeogenesis. The chain is Fructose-1,6-bisphosphatase class 1 1 from Polaromonas naphthalenivorans (strain CJ2).